Reading from the N-terminus, the 633-residue chain is Uracil permease (633 aa).

12 helical membrane-spanning segments follow: residues 143 to 163 (WWQC…FVVL), 173 to 193 (LSFP…WPVI), 197 to 217 (VMAI…VSLM), 242 to 262 (YEFM…LVPP), 268 to 288 (LFTV…IWAI), 310 to 330 (FSWA…TMVI), 350 to 370 (LVCI…VTAA), 400 to 420 (AGVF…NISA), 442 to 462 (GSLF…MATS), 465 to 485 (FTMA…VVCS), 521 to 541 (ALAA…AEVG), and 559 to 579 (YWVG…FFPV).

It belongs to the purine-cytosine permease (2.A.39) family. Glycosylated (possible); but there is not yet direct biochemical evidence for it.

The protein resides in the membrane. Transport of uracil. In Saccharomyces cerevisiae (strain ATCC 204508 / S288c) (Baker's yeast), this protein is Uracil permease (FUR4).